We begin with the raw amino-acid sequence, 307 residues long: Ribonuclease Z (307 aa).

Zn(2+) contacts are provided by histidine 63, histidine 65, aspartate 67, histidine 68, histidine 140, aspartate 211, and histidine 269. The Proton acceptor role is filled by aspartate 67.

This sequence belongs to the RNase Z family. In terms of assembly, homodimer. Zn(2+) serves as cofactor.

The enzyme catalyses Endonucleolytic cleavage of RNA, removing extra 3' nucleotides from tRNA precursor, generating 3' termini of tRNAs. A 3'-hydroxy group is left at the tRNA terminus and a 5'-phosphoryl group is left at the trailer molecule.. Functionally, zinc phosphodiesterase, which displays some tRNA 3'-processing endonuclease activity. Probably involved in tRNA maturation, by removing a 3'-trailer from precursor tRNA. The sequence is that of Ribonuclease Z from Bacillus subtilis (strain 168).